The following is a 386-amino-acid chain: L-lactate dehydrogenase (386 aa).

Positions 1–380 (MIISASTDYR…TSDSLVQVTQ (380 aa)) constitute an FMN hydroxy acid dehydrogenase domain. Tyr-24 serves as a coordination point for substrate. FMN is bound by residues Ser-106 and Gln-127. Tyr-129 contacts substrate. Thr-155 is a binding site for FMN. Residue Arg-164 coordinates substrate. FMN is bound at residue Lys-251. The active-site Proton acceptor is the His-275. Arg-278 is a substrate binding site. Residue 306-330 (DSGIRSGLDVVRMIALGADGVMLGR) coordinates FMN.

The protein belongs to the FMN-dependent alpha-hydroxy acid dehydrogenase family. FMN serves as cofactor.

It is found in the cell inner membrane. The catalysed reaction is (S)-lactate + A = pyruvate + AH2. Its function is as follows. Catalyzes the conversion of L-lactate to pyruvate. Is coupled to the respiratory chain. The protein is L-lactate dehydrogenase of Pectobacterium atrosepticum (strain SCRI 1043 / ATCC BAA-672) (Erwinia carotovora subsp. atroseptica).